We begin with the raw amino-acid sequence, 447 residues long: Probable 3-deoxy-D-manno-octulosonic acid transferase, mitochondrial (447 aa).

The N-terminal 32 residues, 1-32 (MKLGVFVYRLYRALTYGVSPLIHLHIRWRRLR), are a transit peptide targeting the mitochondrion. Catalysis depends on E66, which acts as the Proton acceptor. Residues 278 to 279 (PR), 320 to 322 (LGE), and 347 to 350 (NLSE) each bind CMP.

Belongs to the glycosyltransferase group 1 family. Glycosyltransferase 30 subfamily. Expressed in leaves, stems and flowers.

It localises to the mitochondrion. The catalysed reaction is lipid IVA (E. coli) + CMP-3-deoxy-beta-D-manno-octulosonate = alpha-Kdo-(2-&gt;6)-lipid IVA (E. coli) + CMP + H(+). The enzyme catalyses alpha-Kdo-(2-&gt;6)-lipid IVA (E. coli) + CMP-3-deoxy-beta-D-manno-octulosonate = alpha-Kdo-(2-&gt;4)-alpha-Kdo-(2-&gt;6)-lipid IVA (E. coli) + CMP + H(+). The protein operates within glycolipid biosynthesis; KDO(2)-lipid A biosynthesis; KDO(2)-lipid A from CMP-3-deoxy-D-manno-octulosonate and lipid IV(A): step 1/4. It participates in glycolipid biosynthesis; KDO(2)-lipid A biosynthesis; KDO(2)-lipid A from CMP-3-deoxy-D-manno-octulosonate and lipid IV(A): step 2/4. Functionally, involved in the biosynthesis of lipid A, a phosphorylated glycolipid that in bacteria anchors the lipopolysaccharide to the outer membrane of the cell. Catalyzes the transfer of two 3-deoxy-D-manno-octulosonate (Kdo) residues from CMP-Kdo to lipid IV(A), the tetraacyldisaccharide-1,4'-bisphosphate precursor of lipid A. Lipid A-like molecules in plants may serve as structural components of the outer membranes of mitochondria and/or chloroplasts, or may be involved in signal transduction or plant defense responses. This chain is Probable 3-deoxy-D-manno-octulosonic acid transferase, mitochondrial (KDTA), found in Arabidopsis thaliana (Mouse-ear cress).